A 471-amino-acid polypeptide reads, in one-letter code: MAQAEAVQGKIVQCIGAVVDVEFPRDKMPKIYDALKFEGSALTLEVQQQLGDGVVRTIALGSSDGLRRGLIVTNTQAPITVPVGKATLGRIMDVLGAPIDERGPVDQTLTASIHRKAPAYDELSPSQDLLETGIKVIDLVCPFAKGGKVGLFGGAGVGKTVNMMELINNIAKAHSGLSVFAGVGERTREGNDFYHEMADSGVVNLEKLENSKVAMVYGQMNEPPGNRLRVALTGLTIAESFRDEGRDVLFFVDNIYRYTLAGTEVSALLGRMPSAVGYQPTLAEEMGRLQERITSTKVGSITSIQAVYVPADDLTDPSPATTFAHLDSTVVLSRDIASLGIYPAVDPLDSTSRQLDPNVVGQEHYNVARAVQGTLQRYKELRDIIAILGMDELAPEDKLAVARARKIQRFLSQPFHVAEVFTGSPGKYVPLSETIRGFKMIVNGEADHLPEQAFYMVGTIDEAFEKAKKVA.

Residue 153 to 160 (GGAGVGKT) participates in ATP binding.

It belongs to the ATPase alpha/beta chains family. In terms of assembly, F-type ATPases have 2 components, CF(1) - the catalytic core - and CF(0) - the membrane proton channel. CF(1) has five subunits: alpha(3), beta(3), gamma(1), delta(1), epsilon(1). CF(0) has three main subunits: a(1), b(2) and c(9-12). The alpha and beta chains form an alternating ring which encloses part of the gamma chain. CF(1) is attached to CF(0) by a central stalk formed by the gamma and epsilon chains, while a peripheral stalk is formed by the delta and b chains.

The protein resides in the cell inner membrane. The catalysed reaction is ATP + H2O + 4 H(+)(in) = ADP + phosphate + 5 H(+)(out). Produces ATP from ADP in the presence of a proton gradient across the membrane. The catalytic sites are hosted primarily by the beta subunits. In Verminephrobacter eiseniae (strain EF01-2), this protein is ATP synthase subunit beta.